We begin with the raw amino-acid sequence, 467 residues long: Asparagine--tRNA ligase (467 aa).

The protein belongs to the class-II aminoacyl-tRNA synthetase family. In terms of assembly, homodimer.

The protein localises to the cytoplasm. The catalysed reaction is tRNA(Asn) + L-asparagine + ATP = L-asparaginyl-tRNA(Asn) + AMP + diphosphate + H(+). The chain is Asparagine--tRNA ligase from Bacteroides fragilis (strain YCH46).